Reading from the N-terminus, the 577-residue chain is MNIQALLSEKVSQAMIAAGAPADCEPQVRQSAKVQFGDYQANGMMAVAKKLGMAPRQLAEQVLTHLDLSGIASKVEIAGPGFINIFLDPAFLAEQVQQALASDRLGVSQPARQTIVVDYSAPNVAKEMHVGHLRSTIIGDAAVRTLEFLGHHVIRANHVGDWGTQFGMLIAWLEKQQQENAGEMALADLEGFYRDAKKHYDEDEGFAERARNYVVKLQSGDAYFREMWRKLVDITMTQNQITYDRLNVTLTRDDVMGESLYNPMLPGIVADLKAKGLAVESEGATVVFLDEFKNKEGDPMGVIIQKKDGGYLYTTTDIACAKYRYETLHADRVLYYIDSRQHQHLMQAWTIVRKAGYVPDSVPLEHHMFGMMLGKDGKPFKTRAGGTVKLADLLDEALERARRLVAEKNPDMPADELEKLANAVGIGAVKYADLSKNRTTDYIFDWDNMLAFEGNTAPYMQYAYTRVLSVFRKADIDEQALASAPVIISEDREAQLAARLLQFEETLTVVAREGTPHVMCAYLYDVAGLFSGFYEHCPILSAENDAVRNSRLKLAQLTAKTLKLGLDTLGIETVERM.

A 'HIGH' region motif is present at residues Pro-122–His-132.

Belongs to the class-I aminoacyl-tRNA synthetase family. Monomer.

Its subcellular location is the cytoplasm. It catalyses the reaction tRNA(Arg) + L-arginine + ATP = L-arginyl-tRNA(Arg) + AMP + diphosphate. This chain is Arginine--tRNA ligase, found in Salmonella arizonae (strain ATCC BAA-731 / CDC346-86 / RSK2980).